The chain runs to 280 residues: Pantothenate synthetase (280 aa).

31–38 (MGNLHVGH) is an ATP binding site. The active-site Proton donor is H38. Position 62 (Q62) interacts with (R)-pantoate. Residue Q62 participates in beta-alanine binding. 150–153 (GKKD) lines the ATP pocket. Position 156 (Q156) interacts with (R)-pantoate. ATP is bound by residues V179 and 187–190 (MSSR).

This sequence belongs to the pantothenate synthetase family. In terms of assembly, homodimer.

The protein localises to the cytoplasm. It catalyses the reaction (R)-pantoate + beta-alanine + ATP = (R)-pantothenate + AMP + diphosphate + H(+). It functions in the pathway cofactor biosynthesis; (R)-pantothenate biosynthesis; (R)-pantothenate from (R)-pantoate and beta-alanine: step 1/1. In terms of biological role, catalyzes the condensation of pantoate with beta-alanine in an ATP-dependent reaction via a pantoyl-adenylate intermediate. In Xanthomonas oryzae pv. oryzae (strain MAFF 311018), this protein is Pantothenate synthetase.